The sequence spans 131 residues: Protein FAM107B (131 aa).

A2 is subject to N-acetylalanine. 2 disordered regions span residues 39–78 and 100–131; these read MNQK…KKKS and KLQE…AQES. K50 carries the N6-acetyllysine modification. Over residues 52–78 the composition is skewed to basic and acidic residues; it reads ELQKVMEKRRRDQVIKQKEEEAQKKKS. A coiled-coil region spans residues 61 to 112; it reads RRDQVIKQKEEEAQKKKSDLEIELLKRQQKLEQLELEKQKLQEEQENAPEFV.

The protein belongs to the FAM107 family.

The polypeptide is Protein FAM107B (Rattus norvegicus (Rat)).